The sequence spans 216 residues: N-acetyltransferase 9-like protein (216 aa).

The N-acetyltransferase domain maps to 68–215; it reads VLLNENDEAK…DHVELELMRT (148 aa).

This sequence belongs to the acetyltransferase family. GNAT subfamily.

The protein resides in the cytoplasm. The protein localises to the nucleus. The protein is N-acetyltransferase 9-like protein of Schizosaccharomyces pombe (strain 972 / ATCC 24843) (Fission yeast).